A 941-amino-acid polypeptide reads, in one-letter code: PHD finger protein 14 (941 aa).

The interval 22-295 (DYDSSDDSDF…LSQSKSNEDS (274 aa)) is disordered. Phosphoserine occurs at positions 26 and 29. Residues 36-47 (ASDSEGSGNGSE) show a composition bias toward low complexity. Positions 60–72 (DSEENILEEELNE) are enriched in acidic residues. 3 stretches are compositionally biased toward basic and acidic residues: residues 74–85 (IQVKEEQLKNST), 94–109 (QLIK…NGER), and 116–132 (KEKE…EKAT). A Phosphoserine modification is found at serine 84. The segment covering 133-166 (VSDSAAASAAGTTPATSPPAVTSPSVPTTTTTTT) has biased composition (low complexity). Serine 189 is modified (phosphoserine). Acidic residues-rich tracts occupy residues 194 to 205 (NAMDDYDSEDDN) and 226 to 249 (DGDN…EGND). Tyrosine 199 carries the phosphotyrosine modification. Phosphoserine is present on serine 201. The residue at position 280 (threonine 280) is a Phosphothreonine. The segment covering 281–290 (NDSLTLSQSK) has biased composition (polar residues). A phosphoserine mark is found at serine 283, serine 287, serine 291, serine 295, and serine 301. The segment at 312-373 (ILICCVCLGD…PWFCDACKCG (62 aa)) adopts a PHD-type 1 zinc-finger fold. Zn(2+) contacts are provided by cysteine 315, cysteine 318, cysteine 332, cysteine 335, histidine 340, and cysteine 343. Phosphoserine is present on serine 352. Zn(2+) contacts are provided by cysteine 367, cysteine 370, cysteine 378, cysteine 381, histidine 398, cysteine 401, cysteine 434, cysteine 437, cysteine 451, cysteine 456, histidine 461, cysteine 464, cysteine 488, and histidine 491. The C2HC pre-PHD-type zinc finger occupies 375–408 (SPSCELCPNQDGIFKETDAGRWVHIVCALYVPGV). Residues 432-492 (KECSFCEDPR…PFFAYCKQHA (61 aa)) form a PHD-type 2 zinc finger. A Phosphoserine modification is found at serine 523. Positions 623 to 671 (MIQIQENMAEQKNIKDKLENEQEKLHVEYNKLCESLEELQNLNGKLRSE) form a coiled coil. The PHD-type 3 zinc finger occupies 718–772 (LYSCGICKKNHDQHLLLLCDTCKLHYHLGCLDPPLTRMPRKTKNSYWQCSECDQA). Zn(2+) contacts are provided by cysteine 721, cysteine 724, cysteine 736, cysteine 739, histidine 744, cysteine 747, cysteine 766, and cysteine 769. Phosphoserine occurs at positions 774, 775, and 828. Residues 804 to 855 (VPQDVPPEPKKIPIRNTRTRGRKRSFVPEEEKHEERVPRERRQRQSVLQKKP) are disordered. Residues 829 to 843 (FVPEEEKHEERVPRE) are compositionally biased toward basic and acidic residues. The PHD-type 4 zinc-finger motif lies at 861 to 914 (RTECSTCKGTGDNENLVRCDECRLCYHFGCLDPPLKKSPKQTGYGWICQECDSS). Cysteine 864, cysteine 867, cysteine 879, cysteine 882, histidine 887, cysteine 890, cysteine 908, and cysteine 911 together coordinate Zn(2+). A disordered region spans residues 912-941 (DSSSSKEDENEAEKKNASQELSMEQKTPKK). Positions 915–928 (SSKEDENEAEKKNA) are enriched in basic and acidic residues. Polar residues predominate over residues 930–941 (QELSMEQKTPKK).

In terms of tissue distribution, high levels detected in testis, lung and spleen and low levels in muscle, heart, intestine and kidney (at protein level). Widely expressed in adult with increased levels in intestine, colon and lung.

The protein resides in the nucleus. It is found in the chromosome. It localises to the cytoplasm. Its function is as follows. Histone-binding protein. Binds preferentially to unmodified histone H3 but can also bind to a lesser extent to histone H3 trimethylated at 'Lys-9' (H3K9me3) as well as to histone H3 monomethylated at 'Lys-27' (H3K27ac) and trimethylated at 'Lys-27' (H3K27me3). Represses PDGFRA expression, thus playing a role in regulation of mesenchymal cell proliferation. Suppresses the expression of CDKN1A/p21 by reducing the level of trimethylation of histone H3 'Lys-4', leading to enhanced proliferation of germinal center B cells. The chain is PHD finger protein 14 (Phf14) from Mus musculus (Mouse).